Consider the following 418-residue polypeptide: Serine/threonine transporter SstT (418 aa).

8 helical membrane-spanning segments follow: residues isoleucine 21 to alanine 41, phenylalanine 49 to isoleucine 69, isoleucine 83 to phenylalanine 103, alanine 142 to leucine 162, phenylalanine 190 to alanine 210, leucine 217 to valine 237, methionine 299 to isoleucine 319, and valine 331 to isoleucine 351.

This sequence belongs to the dicarboxylate/amino acid:cation symporter (DAACS) (TC 2.A.23) family.

The protein resides in the cell inner membrane. The catalysed reaction is L-serine(in) + Na(+)(in) = L-serine(out) + Na(+)(out). The enzyme catalyses L-threonine(in) + Na(+)(in) = L-threonine(out) + Na(+)(out). Its function is as follows. Involved in the import of serine and threonine into the cell, with the concomitant import of sodium (symport system). This Yersinia pseudotuberculosis serotype O:1b (strain IP 31758) protein is Serine/threonine transporter SstT.